We begin with the raw amino-acid sequence, 547 residues long: Oncoprotein-induced transcript 3 protein (547 aa).

The signal sequence occupies residues 1–19; the sequence is MPQLLLLACLLIIVTRVAP. N-linked (GlcNAc...) asparagine glycans are attached at residues Asn89 and Asn116. Residues 182–222 enclose the EGF-like; calcium-binding domain; the sequence is DENECEQNNGGCSEICVNLKNSYRCECGIGRVLRSDGKTCE. 3 disulfides stabilise this stretch: Cys186–Cys197, Cys193–Cys206, and Cys208–Cys221. In terms of domain architecture, ZP spans 267 to 516; sequence FCKSNTIEVS…SRCAQGCHRR (250 aa). Residue Asn299 is glycosylated (N-linked (GlcNAc...) asparagine). Positions 520 to 547 are disordered; the sequence is EASTEGEDASGPRSQMLTGGPISIDWED.

It localises to the nucleus envelope. May be involved in hepatocellular function and development. This is Oncoprotein-induced transcript 3 protein (OIT3) from Bos taurus (Bovine).